Reading from the N-terminus, the 1293-residue chain is Cilia- and flagella-associated protein 57 A (1293 aa).

Residues 72-113 (PGTKGITCMTLSPSKRLLAWSEDCDSGIIVVFDLIKLDKLEK) form a WD 1 repeat. The disordered stretch occupies residues 117 to 143 (QNYQEPSDKDKLDKQAEKDRRDRFEKE). Positions 122–143 (PSDKDKLDKQAEKDRRDRFEKE) are enriched in basic and acidic residues. WD repeat units lie at residues 309–348 (PKNE…KNPY), 359–398 (DMKA…MQLN), 411–450 (FHSD…LENS), 535–574 (RGSG…PQKT), and 700–739 (SHFG…YQVK). 3 coiled-coil regions span residues 756 to 1016 (RDQY…REKT), 1045 to 1079 (IKEL…FKRT), and 1209 to 1285 (INHL…QIQN).

The protein belongs to the CFAP57 family. Forms a heterodimer with CFAP57C. Associates with components of the nexin-dynein regulatory complex (N-DRC) and the CFAP184:CFAP263 complex.

The protein resides in the cell projection. It localises to the cilium. Its function is as follows. Associates with components of the nexin-dynein regulatory complex (N-DRC), a key regulator of ciliary/flagellar motility, and might act as an inner dynein arm (IDA) hub or linkage. In Tetrahymena thermophila (strain SB210), this protein is Cilia- and flagella-associated protein 57 A (CFAP57A).